A 712-amino-acid chain; its full sequence is MACTGPSLPSAFDILGAAGQDKLLYLKHKLKTPRPGCQGQDLLHAMVLLKLGQETEARISLEALKADAVARLVARQWAGVDSTEDPEEPPDVSWAVARLYHLLAEEKLCPASLRDVAYQEAVRTLSSRDDHRLGELQDEARNRCGWDIAGDPGSIRTLQSNLGCLPPSSALPSGTRSLPRPIDGVSDWSQGCSLRSTGSPASLASNLEISQSPTMPFLSLHRSPHGPSKLCDDPQASLVPEPVPGGCQEPEEMSWPPSGEIASPPELPSSPPPGLPEVAPDATSTGLPDTPAAPETSTNYPVECTEGSAGPQSLPLPILEPVKNPCSVKDQTPLQLSVEDTTSPNTKPCPPTPTTPETSPPPPPPPPSSTPCSAHLTPSSLFPSSLESSSEQKFYNFVILHARADEHIALRVREKLEALGVPDGATFCEDFQVPGRGELSCLQDAIDHSAFIILLLTSNFDCRLSLHQVNQAMMSNLTRQGSPDCVIPFLPLESSPAQLSSDTASLLSGLVRLDEHSQIFARKVANTFKPHRLQARKAMWRKEQDTRALREQSQHLDGERMQAAALNAAYSAYLQSYLSYQAQMEQLQVAFGSHMSFGTGAPYGARMPFGGQVPLGAPPPFPTWPGCPQPPPLHAWQAGTPPPPSPQPAAFPQSLPFPQSPAFPTASPAPPQSPGLQPLIIHHAQMVQLGLNNHMWNQRGSQAPEDKTQEAE.

The TRIF-NTD stretch occupies residues 1–153; it reads MACTGPSLPS…CGWDIAGDPG (153 aa). Residues 84–91 carry the TRAF6-binding motif; that stretch reads EDPEEPPD. A pLxIS motif motif is present at residues 207 to 210; it reads LEIS. Ser-210 carries the phosphoserine; by TBK1 modification. 2 disordered regions span residues 216–316 and 336–384; these read PFLS…SLPL and LSVE…LFPS. A Glycyl lysine isopeptide (Lys-Gly) (interchain with G-Cter in ubiquitin) cross-link involves residue Lys-229. The TRAF6-binding motif lies at 248 to 255; it reads QEPEEMSW. A compositionally biased stretch (pro residues) spans 265 to 275; the sequence is PELPSSPPPGL. Positions 299–309 match the TRAF6-binding motif; the sequence is NYPVECTEGSA. The span at 347–369 shows a compositional bias: pro residues; it reads KPCPPTPTTPETSPPPPPPPPSS. The TIR domain occupies 393 to 553; it reads KFYNFVILHA…QDTRALREQS (161 aa). Residues 512 to 712 are sufficient to induce apoptosis; that stretch reads RLDEHSQIFA…APEDKTQEAE (201 aa). Composition is skewed to pro residues over residues 620 to 633 and 640 to 649; these read PFPT…PPPL and TPPPPSPQPA. A disordered region spans residues 620–677; it reads PFPTWPGCPQPPPLHAWQAGTPPPPSPQPAAFPQSLPFPQSPAFPTASPAPPQSPGLQ. Residues 650-666 show a composition bias toward low complexity; it reads AFPQSLPFPQSPAFPTA.

Homodimer. Found in a multi-helicase-TICAM1 complex at least composed of DHX36, DDX1, DDX21 and TICAM1; this complex exists in resting cells with or without poly(I:C) RNA ligand stimulation. Interacts (via TIR domain) with DDX21 (via C-terminus). Interacts (via TIR domain) with DHX36 (via C-terminus). Interacts with AZI2 and IRF7. Interacts with TICAM2 in TLR4 recruitment. Interaction with PIAS4 inhibits the TICAM1-induced NF-kappa-B, IRF and IFNB1 activation. Interacts with IKBKB and IKBKE. Interaction with SARM1 blocks TICAM1-dependent transcription factor activation. Interacts with TRAF3. Interacts (when phosphorylated) with IRF3; following activation and phosphorylation on the pLxIS motif by TBK1, recruits IRF3. Interacts with TBK1, TRAF6 and RIPK1 and these interactions are enhanced in the presence of WDFY1. Interacts with TRAFD1. Interacts with UBQLN1 (via UBA domain). Interacts with TLR4. Interacts with WDFY1 in response to poly(I:C). Interacts (via the TIR domain) with TLR3 in response to poly(I:C) and this interaction is enhanced in the presence of WDFY1. Interacts with TRIM56. Component of a multi-helicase-TICAM1 complex that acts as a cytoplasmic sensor of viral double-stranded RNA (dsRNA) and plays a role in the activation of a cascade of antiviral responses including the induction of pro-inflammatory cytokines. Interacts (via the TIR domain) with TLR5. Interacts with TRIM8. Interacts with TAX1BP1 and TRIM32; these interactions target TICAM1 to TAX1BP1-mediated selective autophagic degradation. Interacts with DDX50. In terms of assembly, (Microbial infection) Interacts with hepatitis C virus (HCV) NS3/4A protease; this interaction leads to TICAM1 cleavage, thereby disrupting TLR3 signaling and preventing the establishment of an antiviral state. As to quaternary structure, (Microbial infection) Interacts with Seneca Valley virus protease 3C; this interaction allows the cleavage of TICAM1/TRIF and subsequent suppression of host innate immunity. (Microbial infection) Interacts (via C-terminus) with coxsackievirus B3 (CVB3) protease 3C. Phosphorylated by TBK1. Following activation, phosphorylated by TBK1 at Ser-210 in the pLxIS motif. The phosphorylated pLxIS motif constitutes an IRF3-binding motif, leading to recruitment of the transcription factor IRF3 to induce type-I interferons and other cytokines. In terms of processing, polyubiquitinated at Lys-229 by TRIM38 with 'Lys-48'-linked chains, leading to proteasomal degradation. Polyubiquitinated with 'Lys-6'- and 'Lys-33'-linked chains in a TRIM8-dependent manner; ubiquitination disrupts the interaction with TBK1 and subsequent interferon production. Post-translationally, (Microbial infection) Cleaved and degraded by hepatitis A virus (HAV) protein 3CD allowing the virus to disrupt host TLR3 signaling. (Microbial infection) Cleaved by CVB3 protease 3C allowing the virus to disrupt host TLR3 signaling. In terms of processing, (Microbial infection) Cleaved by Seneca Valley virus protease 3C allowing the virus to disrupt host TLR3 signaling. Post-translationally, (Microbial infection) Cleaved by protease 3C of human enterovirus D68 (EV68) allowing the virus to disrupt host TLR3 signaling. (Microbial infection) Cleaved by HCV protease NS3/4A, thereby disrupting TLR3 signaling and preventing the establishment of an antiviral state. In terms of tissue distribution, ubiquitously expressed but with higher levels in liver.

The protein localises to the cytoplasmic vesicle. It localises to the autophagosome. Its subcellular location is the cytoplasm. The protein resides in the cytosol. It is found in the mitochondrion. In terms of biological role, involved in innate immunity against invading pathogens. Adapter used by TLR3, TLR4 (through TICAM2) and TLR5 to mediate NF-kappa-B and interferon-regulatory factor (IRF) activation, and to induce apoptosis. Ligand binding to these receptors results in TRIF recruitment through its TIR domain. Distinct protein-interaction motifs allow recruitment of the effector proteins TBK1, TRAF6 and RIPK1, which in turn, lead to the activation of transcription factors IRF3 and IRF7, NF-kappa-B and FADD respectively. Phosphorylation by TBK1 on the pLxIS motif leads to recruitment and subsequent activation of the transcription factor IRF3 to induce expression of type I interferon and exert a potent immunity against invading pathogens. Component of a multi-helicase-TICAM1 complex that acts as a cytoplasmic sensor of viral double-stranded RNA (dsRNA) and plays a role in the activation of a cascade of antiviral responses including the induction of pro-inflammatory cytokines. The polypeptide is TIR domain-containing adapter molecule 1 (TICAM1) (Homo sapiens (Human)).